The following is a 395-amino-acid chain: Elongation factor Tu (395 aa).

Residues 10–204 (KTHANIGTIG…AVDSYIPTPE (195 aa)) form the tr-type G domain. The segment at 19–26 (GHVDHGKT) is G1. Residue 19–26 (GHVDHGKT) participates in GTP binding. Mg(2+) is bound at residue threonine 26. The segment at 60–64 (GITIN) is G2. The segment at 81–84 (DCPG) is G3. GTP is bound by residues 81–85 (DCPGH) and 136–139 (NKCD). The segment at 136–139 (NKCD) is G4. The segment at 174 to 176 (SAL) is G5.

The protein belongs to the TRAFAC class translation factor GTPase superfamily. Classic translation factor GTPase family. EF-Tu/EF-1A subfamily. In terms of assembly, monomer.

The protein resides in the cytoplasm. The enzyme catalyses GTP + H2O = GDP + phosphate + H(+). In terms of biological role, GTP hydrolase that promotes the GTP-dependent binding of aminoacyl-tRNA to the A-site of ribosomes during protein biosynthesis. This is Elongation factor Tu from Lysinibacillus sphaericus (strain C3-41).